A 232-amino-acid chain; its full sequence is 5'-methylthioadenosine/S-adenosylhomocysteine nucleosidase (232 aa).

The active-site Proton acceptor is glutamate 12. Substrate contacts are provided by residues glycine 78, isoleucine 152, and 173-174; that span reads ME. Aspartate 197 functions as the Proton donor in the catalytic mechanism.

It belongs to the PNP/UDP phosphorylase family. MtnN subfamily. As to quaternary structure, homodimer.

It carries out the reaction S-adenosyl-L-homocysteine + H2O = S-(5-deoxy-D-ribos-5-yl)-L-homocysteine + adenine. The catalysed reaction is S-methyl-5'-thioadenosine + H2O = 5-(methylsulfanyl)-D-ribose + adenine. It catalyses the reaction 5'-deoxyadenosine + H2O = 5-deoxy-D-ribose + adenine. The protein operates within amino-acid biosynthesis; L-methionine biosynthesis via salvage pathway; S-methyl-5-thio-alpha-D-ribose 1-phosphate from S-methyl-5'-thioadenosine (hydrolase route): step 1/2. Catalyzes the irreversible cleavage of the glycosidic bond in both 5'-methylthioadenosine (MTA) and S-adenosylhomocysteine (SAH/AdoHcy) to adenine and the corresponding thioribose, 5'-methylthioribose and S-ribosylhomocysteine, respectively. Also cleaves 5'-deoxyadenosine, a toxic by-product of radical S-adenosylmethionine (SAM) enzymes, into 5-deoxyribose and adenine. Thus, is required for in vivo function of the radical SAM enzymes biotin synthase and lipoic acid synthase, that are inhibited by 5'-deoxyadenosine accumulation. The sequence is that of 5'-methylthioadenosine/S-adenosylhomocysteine nucleosidase from Escherichia coli O9:H4 (strain HS).